The sequence spans 21 residues: Basic phospholipase A2 BjIV (21 aa).

This sequence belongs to the phospholipase A2 family. Group II subfamily. Can form dimers, trimers and tetramers. The cofactor is Ca(2+). Contains seven disulfide bonds. In terms of tissue distribution, expressed by the venom gland.

Its subcellular location is the secreted. It carries out the reaction a 1,2-diacyl-sn-glycero-3-phosphocholine + H2O = a 1-acyl-sn-glycero-3-phosphocholine + a fatty acid + H(+). Its activity is regulated as follows. Inhibited by crotapotin. Functionally, snake venom phospholipase A2 has a high enzymatic activity and produces moderate myonecrosis in skeletal muscle, but shows no neuromuscular activity in mouse phrenic nerve-diaphragm preparations. PLA2 catalyzes the calcium-dependent hydrolysis of the 2-acyl groups in 3-sn-phosphoglycerides. The polypeptide is Basic phospholipase A2 BjIV (Bothrops jararacussu (Jararacussu)).